The following is a 299-amino-acid chain: Coenzyme PQQ synthesis protein B (299 aa).

The protein belongs to the PqqB family.

Its pathway is cofactor biosynthesis; pyrroloquinoline quinone biosynthesis. In terms of biological role, may be involved in the transport of PQQ or its precursor to the periplasm. The protein is Coenzyme PQQ synthesis protein B of Methylorubrum extorquens (strain ATCC 14718 / DSM 1338 / JCM 2805 / NCIMB 9133 / AM1) (Methylobacterium extorquens).